The following is a 431-amino-acid chain: Adenylosuccinate lyase (431 aa).

N(6)-(1,2-dicarboxyethyl)-AMP contacts are provided by residues 4 to 5 (RY), 67 to 69 (RHD), and 93 to 94 (TS). Catalysis depends on H141, which acts as the Proton donor/acceptor. Q212 provides a ligand contact to N(6)-(1,2-dicarboxyethyl)-AMP. Residue S262 is the Proton donor/acceptor of the active site. N(6)-(1,2-dicarboxyethyl)-AMP-binding positions include S263, 268 to 270 (KRN), N276, and 307 to 311 (SAERI).

This sequence belongs to the lyase 1 family. Adenylosuccinate lyase subfamily. As to quaternary structure, homodimer and homotetramer. Residues from neighboring subunits contribute catalytic and substrate-binding residues to each active site.

It carries out the reaction N(6)-(1,2-dicarboxyethyl)-AMP = fumarate + AMP. The enzyme catalyses (2S)-2-[5-amino-1-(5-phospho-beta-D-ribosyl)imidazole-4-carboxamido]succinate = 5-amino-1-(5-phospho-beta-D-ribosyl)imidazole-4-carboxamide + fumarate. It participates in purine metabolism; AMP biosynthesis via de novo pathway; AMP from IMP: step 2/2. The protein operates within purine metabolism; IMP biosynthesis via de novo pathway; 5-amino-1-(5-phospho-D-ribosyl)imidazole-4-carboxamide from 5-amino-1-(5-phospho-D-ribosyl)imidazole-4-carboxylate: step 2/2. In terms of biological role, catalyzes two reactions in de novo purine nucleotide biosynthesis. Catalyzes the breakdown of 5-aminoimidazole- (N-succinylocarboxamide) ribotide (SAICAR or 2-[5-amino-1-(5-phospho-beta-D-ribosyl)imidazole-4-carboxamido]succinate) to 5-aminoimidazole-4-carboxamide ribotide (AICAR or 5-amino-1-(5-phospho-beta-D-ribosyl)imidazole-4-carboxamide) and fumarate, and of adenylosuccinate (ADS or N(6)-(1,2-dicarboxyethyl)-AMP) to adenosine monophosphate (AMP) and fumarate. This Staphylococcus aureus (strain USA300) protein is Adenylosuccinate lyase (purB).